A 732-amino-acid polypeptide reads, in one-letter code: Protein FAR1-RELATED SEQUENCE 4 (732 aa).

The FAR1 domain occupies 11–97; the sequence is LFYKDYAKSV…VKEHNHDLLP (87 aa). Positions 212–308 constitute an MULE domain; the sequence is VVSFETSYFV…CLWHVLDQLP (97 aa). The SWIM-type zinc-finger motif lies at 490 to 526; that stretch reads YLVDWDEFKSDIYCSCRSFEYKGYLCRHAIVVLQMSG. The disordered stretch occupies residues 623–683; sequence QEENQYGSTS…ETVGEGSQEG (61 aa). The segment covering 624–635 has biased composition (polar residues); it reads EENQYGSTSTQI.

This sequence belongs to the FHY3/FAR1 family. As to expression, expressed in hypocotyls, rosette and cauline leaves, inflorescences stems, flowers and siliques.

Its subcellular location is the nucleus. Functionally, putative transcription activator involved in regulating light control of development. The chain is Protein FAR1-RELATED SEQUENCE 4 (FRS4) from Arabidopsis thaliana (Mouse-ear cress).